Reading from the N-terminus, the 292-residue chain is Histamine N-methyltransferase (292 aa).

Glutamate 28 lines the substrate pocket. S-adenosyl-L-methionine contacts are provided by glycine 60, glutamate 89, glutamine 94, serine 120, and isoleucine 142. Asparagine 283 contacts substrate.

This sequence belongs to the class I-like SAM-binding methyltransferase superfamily. HNMT family. Monomer.

It localises to the cytoplasm. It carries out the reaction histamine + S-adenosyl-L-methionine = N(tau)-methylhistamine + S-adenosyl-L-homocysteine + H(+). Its function is as follows. Inactivates histamine by N-methylation. Plays an important role in degrading histamine and in regulating the airway response to histamine. The sequence is that of Histamine N-methyltransferase (HNMT) from Bos taurus (Bovine).